We begin with the raw amino-acid sequence, 302 residues long: MIPNNTKFSNPLFGRILTAMVTPFKKNGAVDYELAIKLSNYLCENGSDGIVLCGTTGESPTLTWAEQHNLFVAVKGSLNSRSKVIVGTGSNCTSEAIEATQKAYEFGADGALVVVPYYNKPPQEGLYKHFSSIANAASDLPLMLYNIPGRTGCNLLPTTVNKLMNFPNILSIKAASGRIEEVTELRAACGSKLSIYSGDDSLLLPMLSVGAVGVVSVASHIVGLQLKTMIESFQKGEISIALDIHEKLQPLFKALFETTNPIPIKAALELRGWQVGSPRNPLTPLIKEKRESLLQIIQNLSL.

Residue T56 coordinates pyruvate. Catalysis depends on Y145, which acts as the Proton donor/acceptor. The Schiff-base intermediate with substrate role is filled by K173. V215 contributes to the pyruvate binding site.

Belongs to the DapA family. Homotetramer; dimer of dimers.

It localises to the cytoplasm. It carries out the reaction L-aspartate 4-semialdehyde + pyruvate = (2S,4S)-4-hydroxy-2,3,4,5-tetrahydrodipicolinate + H2O + H(+). The protein operates within amino-acid biosynthesis; L-lysine biosynthesis via DAP pathway; (S)-tetrahydrodipicolinate from L-aspartate: step 3/4. Functionally, catalyzes the condensation of (S)-aspartate-beta-semialdehyde [(S)-ASA] and pyruvate to 4-hydroxy-tetrahydrodipicolinate (HTPA). The chain is 4-hydroxy-tetrahydrodipicolinate synthase from Prochlorococcus marinus subsp. pastoris (strain CCMP1986 / NIES-2087 / MED4).